We begin with the raw amino-acid sequence, 78 residues long: Translation initiation factor IF-1 (78 aa).

Residues 2-78 (SKNNLNETES…TRARITYRFK (77 aa)) enclose the S1-like domain.

The protein belongs to the IF-1 family. In terms of assembly, component of the 30S ribosomal translation pre-initiation complex which assembles on the 30S ribosome in the order IF-2 and IF-3, IF-1 and N-formylmethionyl-tRNA(fMet); mRNA recruitment can occur at any time during PIC assembly.

It localises to the cytoplasm. One of the essential components for the initiation of protein synthesis. Stabilizes the binding of IF-2 and IF-3 on the 30S subunit to which N-formylmethionyl-tRNA(fMet) subsequently binds. Helps modulate mRNA selection, yielding the 30S pre-initiation complex (PIC). Upon addition of the 50S ribosomal subunit IF-1, IF-2 and IF-3 are released leaving the mature 70S translation initiation complex. The protein is Translation initiation factor IF-1 of Onion yellows phytoplasma (strain OY-M).